The following is a 117-amino-acid chain: Protein Aeq5-like2 (117 aa).

The Cytoplasmic portion of the chain corresponds to 1-36 (MLVNARAIRQSIGIVVAQCRRDLESNRTLDYRTRMR). Residues 37–56 (TSLILVAMVMVSVLLPYTYG) traverse the membrane as a helical segment. At 57–117 (SSCDSFCTEQ…RFTKEPTEES (61 aa)) the chain is on the extracellular side. 4 disulfide bridges follow: cysteine 59-cysteine 94, cysteine 63-cysteine 90, cysteine 70-cysteine 83, and cysteine 74-cysteine 80.

Post-translationally, the mature peptide may be cleaved at a dibasic residue site and be shorter than the sequence shown (possibly residues 1-94). As to expression, expressed in endodermal ganglion neurons, apparently bipolar and following mesentery folds (observed in both planulae and primary polyps). It not expressed in nematocytes.

It localises to the membrane. The chain is Protein Aeq5-like2 from Nematostella vectensis (Starlet sea anemone).